The primary structure comprises 116 residues: MKLTMDKIDGMLIACLQGVVNSANAEQLEAELAAQVDKGERRVVLDLGRLDYISSAGLRVVLLVAKQLRQVQGELVLCELKPHVREVFEISGFLSIFPVANSREAAAAAFKTALPR.

Residues 1 to 110 (MKLTMDKIDG…NSREAAAAAF (110 aa)) enclose the STAS domain. S55 carries the phosphoserine; by BtrW modification.

The protein belongs to the anti-sigma-factor antagonist family. In terms of assembly, interacts with BtrW. Phosphorylated by BtrW. Dephosphorylated by BtrU.

Its function is as follows. Possible positive regulator of sigma-B activity. Non-phosphorylated BtrV binds to BtrW, preventing its association with an unknown partner(s) that might be sigma-B. When phosphorylated, releases BtrW, which is then free to complex with and inactivate its partner. Involved in type III secretion system (T3SS). This chain is Putative anti-sigma factor antagonist BtrV (btrV), found in Bordetella bronchiseptica (strain ATCC BAA-588 / NCTC 13252 / RB50) (Alcaligenes bronchisepticus).